The following is a 253-amino-acid chain: Porin thermoregulatory protein EnvY (253 aa).

The HTH araC/xylS-type domain maps to 149–246 (DSVCRIIQSD…GLTPLNYLAK (98 aa)). 2 consecutive DNA-binding regions (H-T-H motif) follow at residues 166 to 187 (RIVA…KNEN) and 213 to 236 (ITQV…KAFY).

Influences the temperature-dependent expression of several E.coli envelope proteins, most notably the porins OmpF and OmpC and the lambda receptor, LamB. In Escherichia coli (strain K12), this protein is Porin thermoregulatory protein EnvY (envY).